Reading from the N-terminus, the 306-residue chain is NAD-dependent protein deacylase (306 aa).

The region spanning 1-305 is the Deacetylase sirtuin-type domain; the sequence is MNKQLKEFQE…PIALKPLIGD (305 aa). 23–42 serves as a coordination point for NAD(+); that stretch reads GAGLSASSGLPTFRGSQGLW. The substrate site is built by tyrosine 67 and arginine 70. Residue 103 to 106 coordinates NAD(+); the sequence is QNVD. The active-site Proton acceptor is the histidine 123. The Zn(2+) site is built by cysteine 131, cysteine 136, cysteine 200, and cysteine 203. NAD(+)-binding positions include 243–245, 269–271, and alanine 291; these read GTS and NTD.

This sequence belongs to the sirtuin family. Class III subfamily. The cofactor is Zn(2+).

It localises to the mitochondrion. The enzyme catalyses N(6)-malonyl-L-lysyl-[protein] + NAD(+) + H2O = 2''-O-malonyl-ADP-D-ribose + nicotinamide + L-lysyl-[protein]. It catalyses the reaction N(6)-succinyl-L-lysyl-[protein] + NAD(+) + H2O = 2''-O-succinyl-ADP-D-ribose + nicotinamide + L-lysyl-[protein]. It carries out the reaction N(6)-glutaryl-L-lysyl-[protein] + NAD(+) + H2O = 2''-O-glutaryl-ADP-D-ribose + nicotinamide + L-lysyl-[protein]. Functionally, NAD-dependent lysine demalonylase, desuccinylase and deglutarylase that specifically removes malonyl, succinyl and glutaryl groups on target proteins. Has weak NAD-dependent protein deacetylase activity; however this activity may not be physiologically relevant in vivo. This is NAD-dependent protein deacylase from Candida albicans (strain SC5314 / ATCC MYA-2876) (Yeast).